The following is a 262-amino-acid chain: 1-(5-phosphoribosyl)-5-[(5-phosphoribosylamino)methylideneamino] imidazole-4-carboxamide isomerase (262 aa).

D8 (proton acceptor) is an active-site residue. D130 functions as the Proton donor in the catalytic mechanism.

The protein belongs to the HisA/HisF family.

It localises to the cytoplasm. The enzyme catalyses 1-(5-phospho-beta-D-ribosyl)-5-[(5-phospho-beta-D-ribosylamino)methylideneamino]imidazole-4-carboxamide = 5-[(5-phospho-1-deoxy-D-ribulos-1-ylimino)methylamino]-1-(5-phospho-beta-D-ribosyl)imidazole-4-carboxamide. It participates in amino-acid biosynthesis; L-histidine biosynthesis; L-histidine from 5-phospho-alpha-D-ribose 1-diphosphate: step 4/9. In Chloroherpeton thalassium (strain ATCC 35110 / GB-78), this protein is 1-(5-phosphoribosyl)-5-[(5-phosphoribosylamino)methylideneamino] imidazole-4-carboxamide isomerase.